The following is a 454-amino-acid chain: Pup--protein ligase (454 aa).

Glu9 contributes to the Mg(2+) binding site. Residue Arg53 participates in ATP binding. A Mg(2+)-binding site is contributed by Tyr55. Residue Asp57 is the Proton acceptor of the active site. Glu63 is a Mg(2+) binding site. 2 residues coordinate ATP: Thr66 and Trp420.

Belongs to the Pup ligase/Pup deamidase family. Pup-conjugating enzyme subfamily.

It catalyses the reaction ATP + [prokaryotic ubiquitin-like protein]-L-glutamate + [protein]-L-lysine = ADP + phosphate + N(6)-([prokaryotic ubiquitin-like protein]-gamma-L-glutamyl)-[protein]-L-lysine.. Its pathway is protein degradation; proteasomal Pup-dependent pathway. It participates in protein modification; protein pupylation. Catalyzes the covalent attachment of the prokaryotic ubiquitin-like protein modifier Pup to the proteasomal substrate proteins, thereby targeting them for proteasomal degradation. This tagging system is termed pupylation. The ligation reaction involves the side-chain carboxylate of the C-terminal glutamate of Pup and the side-chain amino group of a substrate lysine. This is Pup--protein ligase from Paenarthrobacter aurescens (strain TC1).